We begin with the raw amino-acid sequence, 93 residues long: Ribonuclease P protein component 1 (93 aa).

Belongs to the eukaryotic/archaeal RNase P protein component 1 family. Consists of a catalytic RNA component and at least 4-5 protein subunits.

Its subcellular location is the cytoplasm. It carries out the reaction Endonucleolytic cleavage of RNA, removing 5'-extranucleotides from tRNA precursor.. In terms of biological role, part of ribonuclease P, a protein complex that generates mature tRNA molecules by cleaving their 5'-ends. This is Ribonuclease P protein component 1 from Methanosphaera stadtmanae (strain ATCC 43021 / DSM 3091 / JCM 11832 / MCB-3).